Consider the following 161-residue polypeptide: Ribonuclease P protein component (161 aa).

The interval 1 to 20 (MPDELRAEKSFPSKPYDSLK) is disordered.

The protein belongs to the RnpA family. Consists of a catalytic RNA component (M1 or rnpB) and a protein subunit.

The catalysed reaction is Endonucleolytic cleavage of RNA, removing 5'-extranucleotides from tRNA precursor.. Its function is as follows. RNaseP catalyzes the removal of the 5'-leader sequence from pre-tRNA to produce the mature 5'-terminus. It can also cleave other RNA substrates such as 4.5S RNA. The protein component plays an auxiliary but essential role in vivo by binding to the 5'-leader sequence and broadening the substrate specificity of the ribozyme. The protein is Ribonuclease P protein component of Helicobacter pylori (strain P12).